The primary structure comprises 29 residues: Kappa-sparatoxin-Hv1e (29 aa).

Cystine bridges form between C3–C17, C10–C22, and C16–C26.

In terms of tissue distribution, expressed by the venom gland.

Its subcellular location is the secreted. Inhibitor of voltage-gated potassium channels of the Kv4/KCND family. Blocks calcium channels (Cav). The chain is Kappa-sparatoxin-Hv1e from Heteropoda venatoria (Brown huntsman spider).